A 446-amino-acid chain; its full sequence is Ribulose bisphosphate carboxylase large chain (446 aa).

Substrate-binding residues include Asn-89 and Thr-139. Lys-141 serves as the catalytic Proton acceptor. Substrate is bound at residue Lys-143. Mg(2+) contacts are provided by Lys-167, Asp-169, and Glu-170. Position 167 is an N6-carboxylysine (Lys-167). The active-site Proton acceptor is His-260. Residues Arg-261, His-293, and Ser-345 each coordinate substrate.

The protein belongs to the RuBisCO large chain family. Type I subfamily. Heterohexadecamer of 8 large chains and 8 small chains; disulfide-linked. The disulfide link is formed within the large subunit homodimers. Mg(2+) is required as a cofactor. In terms of processing, the disulfide bond which can form in the large chain dimeric partners within the hexadecamer appears to be associated with oxidative stress and protein turnover.

Its subcellular location is the plastid. The protein localises to the chloroplast. The catalysed reaction is 2 (2R)-3-phosphoglycerate + 2 H(+) = D-ribulose 1,5-bisphosphate + CO2 + H2O. It carries out the reaction D-ribulose 1,5-bisphosphate + O2 = 2-phosphoglycolate + (2R)-3-phosphoglycerate + 2 H(+). RuBisCO catalyzes two reactions: the carboxylation of D-ribulose 1,5-bisphosphate, the primary event in carbon dioxide fixation, as well as the oxidative fragmentation of the pentose substrate in the photorespiration process. Both reactions occur simultaneously and in competition at the same active site. This chain is Ribulose bisphosphate carboxylase large chain, found in Exacum affine (Persian violet).